The sequence spans 500 residues: Probable cytosol aminopeptidase (500 aa).

Lys-264 and Asp-269 together coordinate Mn(2+). Residue Lys-276 is part of the active site. The Mn(2+) site is built by Asp-287, Asp-346, and Glu-348. Residue Arg-350 is part of the active site.

This sequence belongs to the peptidase M17 family. Requires Mn(2+) as cofactor.

Its subcellular location is the cytoplasm. It carries out the reaction Release of an N-terminal amino acid, Xaa-|-Yaa-, in which Xaa is preferably Leu, but may be other amino acids including Pro although not Arg or Lys, and Yaa may be Pro. Amino acid amides and methyl esters are also readily hydrolyzed, but rates on arylamides are exceedingly low.. It catalyses the reaction Release of an N-terminal amino acid, preferentially leucine, but not glutamic or aspartic acids.. Its function is as follows. Presumably involved in the processing and regular turnover of intracellular proteins. Catalyzes the removal of unsubstituted N-terminal amino acids from various peptides. This chain is Probable cytosol aminopeptidase, found in Nitrobacter hamburgensis (strain DSM 10229 / NCIMB 13809 / X14).